Reading from the N-terminus, the 287-residue chain is mRNA-capping enzyme small subunit (287 aa).

Heterodimer of a large and a small subunit.

The protein localises to the virion. The catalysed reaction is a 5'-end (5'-triphosphoguanosine)-ribonucleoside in mRNA + S-adenosyl-L-methionine = a 5'-end (N(7)-methyl 5'-triphosphoguanosine)-ribonucleoside in mRNA + S-adenosyl-L-homocysteine. Functionally, catalyzes the last reaction in the mRNA cap formation pathway. This Sus scrofa (Pig) protein is mRNA-capping enzyme small subunit.